We begin with the raw amino-acid sequence, 259 residues long: Caffeoyl-CoA O-methyltransferase 1 (259 aa).

Low complexity predominate over residues 1 to 14 (MATTTTEATKTSST). Residues 1–29 (MATTTTEATKTSSTNGEDQKQSQNLRHQE) form a disordered region. Ala2 carries the N-acetylalanine modification. Lys33 provides a ligand contact to substrate. S-adenosyl-L-methionine contacts are provided by residues Thr75, Glu97, 99–100 (GV), Ser105, Asp123, and Ala152. Position 175 (Asp175) interacts with substrate. Asp175 is a binding site for a divalent metal cation. Position 177 (Asp177) interacts with S-adenosyl-L-methionine. Positions 201 and 202 each coordinate a divalent metal cation. Substrate is bound at residue Asn206.

The protein belongs to the class I-like SAM-binding methyltransferase superfamily. Cation-dependent O-methyltransferase family. CCoAMT subfamily. A divalent metal cation serves as cofactor. As to expression, expressed in stems and roots. Detected in leaves, siliques, flower buds, flowers. Expressed in the tapetum, but not in the endothecium. Detected in the vascular system of leaves and all flower organs, including stigma, stamens, petals and sepals.

It catalyses the reaction (E)-caffeoyl-CoA + S-adenosyl-L-methionine = (E)-feruloyl-CoA + S-adenosyl-L-homocysteine + H(+). Its pathway is aromatic compound metabolism; phenylpropanoid biosynthesis. Its function is as follows. Methylates caffeoyl-CoA to feruloyl-CoA. Has a very low activity with caffeic acid and esculetin. Involved in scopoletin biosynthesis in roots. The polypeptide is Caffeoyl-CoA O-methyltransferase 1 (CCOAOMT1) (Arabidopsis thaliana (Mouse-ear cress)).